Here is a 418-residue protein sequence, read N- to C-terminus: D-amino acid dehydrogenase (418 aa).

Residue 3–17 participates in FAD binding; that stretch reads VLVLGAGVVGTTSAW.

The protein belongs to the DadA oxidoreductase family. The cofactor is FAD.

It carries out the reaction a D-alpha-amino acid + A + H2O = a 2-oxocarboxylate + AH2 + NH4(+). It participates in amino-acid degradation; D-alanine degradation; NH(3) and pyruvate from D-alanine: step 1/1. Functionally, oxidative deamination of D-amino acids. This is D-amino acid dehydrogenase from Dechloromonas aromatica (strain RCB).